We begin with the raw amino-acid sequence, 624 residues long: uncharacterized protein (624 aa).

Residues 1-29 (MRFHRQGTAATVGVLLIVLLGFCWKLSES) form the signal peptide. N-linked (GlcNAc...) asparagine glycosylation is found at N68, N150, N219, N366, N441, N447, N464, and N528. A disordered region spans residues 141–174 (LERRHGRFGNGTHGDHPKGPPPPPPPDEKDRGSQ).

It is found in the secreted. This is an uncharacterized protein from Saccharomyces cerevisiae (strain ATCC 204508 / S288c) (Baker's yeast).